Here is a 402-residue protein sequence, read N- to C-terminus: 4-hydroxy-3-methylbut-2-en-1-yl diphosphate synthase (ferredoxin) (402 aa).

[4Fe-4S] cluster-binding residues include C311, C314, C345, and E352.

Belongs to the IspG family. [4Fe-4S] cluster serves as cofactor.

It catalyses the reaction (2E)-4-hydroxy-3-methylbut-2-enyl diphosphate + 2 oxidized [2Fe-2S]-[ferredoxin] + H2O = 2-C-methyl-D-erythritol 2,4-cyclic diphosphate + 2 reduced [2Fe-2S]-[ferredoxin] + H(+). It participates in isoprenoid biosynthesis; isopentenyl diphosphate biosynthesis via DXP pathway; isopentenyl diphosphate from 1-deoxy-D-xylulose 5-phosphate: step 5/6. Its function is as follows. Converts 2C-methyl-D-erythritol 2,4-cyclodiphosphate (ME-2,4cPP) into 1-hydroxy-2-methyl-2-(E)-butenyl 4-diphosphate, using ferredoxin I (PetF) as the reducing agent. The protein is 4-hydroxy-3-methylbut-2-en-1-yl diphosphate synthase (ferredoxin) of Thermosynechococcus vestitus (strain NIES-2133 / IAM M-273 / BP-1).